Here is a 157-residue protein sequence, read N- to C-terminus: Small ribosomal subunit protein uS7 (157 aa).

Belongs to the universal ribosomal protein uS7 family. In terms of assembly, part of the 30S ribosomal subunit. Contacts proteins S9 and S11.

Functionally, one of the primary rRNA binding proteins, it binds directly to 16S rRNA where it nucleates assembly of the head domain of the 30S subunit. Is located at the subunit interface close to the decoding center, probably blocks exit of the E-site tRNA. The sequence is that of Small ribosomal subunit protein uS7 from Stenotrophomonas maltophilia (strain R551-3).